The sequence spans 530 residues: Laccase-2 (530 aa).

The N-terminal stretch at 1–23 (MLLSSAFVGSCLAILNFAAAVSA) is a signal peptide. Plastocyanin-like domains follow at residues 36-154 (NKVI…YDPE) and 167-311 (TTII…RYTN). The N-linked (GlcNAc...) asparagine glycan is linked to asparagine 82. Positions 88 and 90 each coordinate Cu cation. 2 disulfide bridges follow: cysteine 109–cysteine 520 and cysteine 141–cysteine 228. A glycan (N-linked (GlcNAc...) asparagine) is linked at asparagine 120. Cu cation-binding residues include histidine 133 and histidine 135. 8 N-linked (GlcNAc...) asparagine glycosylation sites follow: asparagine 191, asparagine 240, asparagine 292, asparagine 311, asparagine 366, asparagine 375, asparagine 392, and asparagine 412. Residues 379-504 (YVNPTVPVLL…FAVVLAEAPQ (126 aa)) form the Plastocyanin-like 3 domain. Residues histidine 428, histidine 431, histidine 433, histidine 484, cysteine 485, histidine 486, and histidine 490 each contribute to the Cu cation site.

The protein belongs to the multicopper oxidase family. Cu cation serves as cofactor.

Its subcellular location is the secreted. The catalysed reaction is 4 hydroquinone + O2 = 4 benzosemiquinone + 2 H2O. With respect to regulation, inhibited by chloride ions. Inhibited by citrate. Inhibited by oxalate. Activated by acetate. Its function is as follows. In vitro, has activity towards 2,2'-azino-bis(3-ethylbenzthiazoline-6-sulfonic acid) (ABTS), 2,6-dimethoxy-phenol, and guaiacol. Although brown rot fungi preferentially degrade hemicellulose and cellulose, the enzyme may contribute to generating small amounts of lignin breakdown products required for catalytic reactions. The polypeptide is Laccase-2 (Fomitopsis schrenkii (Brown rot fungus)).